Here is a 245-residue protein sequence, read N- to C-terminus: 3-deoxy-manno-octulosonate cytidylyltransferase (245 aa).

Belongs to the KdsB family.

The protein localises to the cytoplasm. It catalyses the reaction 3-deoxy-alpha-D-manno-oct-2-ulosonate + CTP = CMP-3-deoxy-beta-D-manno-octulosonate + diphosphate. Its pathway is nucleotide-sugar biosynthesis; CMP-3-deoxy-D-manno-octulosonate biosynthesis; CMP-3-deoxy-D-manno-octulosonate from 3-deoxy-D-manno-octulosonate and CTP: step 1/1. The protein operates within bacterial outer membrane biogenesis; lipopolysaccharide biosynthesis. Functionally, activates KDO (a required 8-carbon sugar) for incorporation into bacterial lipopolysaccharide in Gram-negative bacteria. The polypeptide is 3-deoxy-manno-octulosonate cytidylyltransferase (Elusimicrobium minutum (strain Pei191)).